A 405-amino-acid polypeptide reads, in one-letter code: Arginine biosynthesis bifunctional protein ArgJ (405 aa).

Substrate is bound by residues T152, K178, T189, E276, N400, and T405. T189 serves as the catalytic Nucleophile.

The protein belongs to the ArgJ family. In terms of assembly, heterotetramer of two alpha and two beta chains.

It localises to the cytoplasm. The catalysed reaction is N(2)-acetyl-L-ornithine + L-glutamate = N-acetyl-L-glutamate + L-ornithine. It catalyses the reaction L-glutamate + acetyl-CoA = N-acetyl-L-glutamate + CoA + H(+). The protein operates within amino-acid biosynthesis; L-arginine biosynthesis; L-ornithine and N-acetyl-L-glutamate from L-glutamate and N(2)-acetyl-L-ornithine (cyclic): step 1/1. It functions in the pathway amino-acid biosynthesis; L-arginine biosynthesis; N(2)-acetyl-L-ornithine from L-glutamate: step 1/4. In terms of biological role, catalyzes two activities which are involved in the cyclic version of arginine biosynthesis: the synthesis of N-acetylglutamate from glutamate and acetyl-CoA as the acetyl donor, and of ornithine by transacetylation between N(2)-acetylornithine and glutamate. This chain is Arginine biosynthesis bifunctional protein ArgJ, found in Pseudomonas syringae pv. tomato (strain ATCC BAA-871 / DC3000).